The chain runs to 151 residues: Large ribosomal subunit protein uL13 (151 aa).

It belongs to the universal ribosomal protein uL13 family. As to quaternary structure, part of the 50S ribosomal subunit.

Its function is as follows. This protein is one of the early assembly proteins of the 50S ribosomal subunit, although it is not seen to bind rRNA by itself. It is important during the early stages of 50S assembly. This Synechococcus sp. (strain JA-2-3B'a(2-13)) (Cyanobacteria bacterium Yellowstone B-Prime) protein is Large ribosomal subunit protein uL13.